We begin with the raw amino-acid sequence, 781 residues long: Coiled-coil and C2 domain-containing protein 1-like (781 aa).

5 disordered regions span residues 32–63, 94–134, 187–296, 313–373, and 403–447; these read MGRVSRPAAPARGAPPAARGRPAPAAPANVPG, ELNG…APNS, ESEI…AKES, CSAD…TEGN, and GELP…VEGK. A compositionally biased stretch (low complexity) spans 37-59; sequence RPAAPARGAPPAARGRPAPAAPA. Positions 98 to 107 are enriched in gly residues; that stretch reads LVGGGGGGGA. A compositionally biased stretch (low complexity) spans 108–118; sequence APTVPTRAAPR. 2 stretches are compositionally biased toward pro residues: residues 119–129 and 204–222; these read APGPSGPPPSA and PLPPPAPTAQPAHHPPAPP. The span at 244–256 shows a compositional bias: low complexity; sequence APAPTAAAPPATK. Residues 269 to 280 show a composition bias toward basic residues; sequence ILHHRRDLHKQN. The span at 285–296 shows a compositional bias: basic and acidic residues; the sequence is IADKDKESAKES. The segment covering 324 to 341 has biased composition (pro residues); that stretch reads PPSPPPYRKPAPPQPQAP. Residues 363 to 373 show a composition bias toward basic and acidic residues; the sequence is KMAEKAKTEGN. One can recognise a C2 domain in the interval 605-741; sequence YEMRQIPSAD…EHSAEMEESL (137 aa).

It belongs to the CC2D1 family.

The sequence is that of Coiled-coil and C2 domain-containing protein 1-like from Caenorhabditis elegans.